The following is a 414-amino-acid chain: BICD family-like cargo adapter 2 (414 aa).

Positions 34–341 (GQALLEKNEE…DALNQQLLNT (308 aa)) form a coiled coil. The segment covering 372 to 384 (QEKEKENNKERTG) has biased composition (basic and acidic residues). The interval 372–399 (QEKEKENNKERTGFQRGTRTTKSLRLRG) is disordered.

The sequence is that of BICD family-like cargo adapter 2 (bicdl2) from Danio rerio (Zebrafish).